A 188-amino-acid chain; its full sequence is UPF0301 protein ABO_0112 (188 aa).

This sequence belongs to the UPF0301 (AlgH) family.

The sequence is that of UPF0301 protein ABO_0112 from Alcanivorax borkumensis (strain ATCC 700651 / DSM 11573 / NCIMB 13689 / SK2).